The sequence spans 659 residues: Threonine--tRNA ligase (659 aa).

Positions 1–61 (MIDLIFPDGS…TPDLLGGGNR (61 aa)) constitute a TGS domain. The tract at residues 249-541 (DHRKLGKTMD…LLENYAGHLP (293 aa)) is catalytic. 3 residues coordinate Zn(2+): Cys-341, His-392, and His-518. The segment at 637 to 659 (EEATPPDLARDRAVAAPAELAQA) is disordered.

It belongs to the class-II aminoacyl-tRNA synthetase family. Homodimer. Zn(2+) serves as cofactor.

Its subcellular location is the cytoplasm. The catalysed reaction is tRNA(Thr) + L-threonine + ATP = L-threonyl-tRNA(Thr) + AMP + diphosphate + H(+). Its function is as follows. Catalyzes the attachment of threonine to tRNA(Thr) in a two-step reaction: L-threonine is first activated by ATP to form Thr-AMP and then transferred to the acceptor end of tRNA(Thr). Also edits incorrectly charged L-seryl-tRNA(Thr). The protein is Threonine--tRNA ligase of Caulobacter sp. (strain K31).